We begin with the raw amino-acid sequence, 393 residues long: Beta-1,4-galactosyltransferase 3 (393 aa).

The Cytoplasmic portion of the chain corresponds to 1-10; the sequence is MLRRLLERPC. The helical; Signal-anchor for type II membrane protein transmembrane segment at 11 to 31 threads the bilayer; that stretch reads TLALLVGSQLAVMMYLSLGGF. The Lumenal portion of the chain corresponds to 32-393; the sequence is RSLSALFGRD…ANHTALRGSH (362 aa). Asparagine 57 carries N-linked (GlcNAc...) asparagine glycosylation. Cysteines 77 and 119 form a disulfide. 130 to 134 lines the UDP-alpha-D-galactose pocket; it reads PHRAR. The N-linked (GlcNAc...) asparagine glycan is linked to asparagine 166. UDP-alpha-D-galactose-binding positions include 169–171, 196–197, tyrosine 226, and tryptophan 258; these read FNR and VD. Cysteine 190 and cysteine 209 are joined by a disulfide. Aspartate 197 contacts Mn(2+). 260–263 is a binding site for N-acetyl-D-glucosamine; sequence GEDD. Histidine 291 contributes to the Mn(2+) binding site. 291–293 serves as a coordination point for UDP-alpha-D-galactose; that stretch reads HRG. Arginine 303 contacts N-acetyl-D-glucosamine. Asparagine 337 and asparagine 385 each carry an N-linked (GlcNAc...) asparagine glycan. Positions 339–393 are disordered; the sequence is TADIGTDPRGPRAPSGPRYPPGSSQAFRQEMLQRRPPARPGPPPTANHTALRGSH.

Belongs to the glycosyltransferase 7 family. The cofactor is Mn(2+).

The protein localises to the golgi apparatus. It localises to the golgi stack membrane. The enzyme catalyses an N-acetyl-beta-D-glucosaminyl derivative + UDP-alpha-D-galactose = a beta-D-galactosyl-(1-&gt;4)-N-acetyl-beta-D-glucosaminyl derivative + UDP + H(+). The catalysed reaction is N-acetyl-D-glucosamine + UDP-alpha-D-galactose = beta-D-galactosyl-(1-&gt;4)-N-acetyl-D-glucosamine + UDP + H(+). It carries out the reaction a beta-D-GlcNAc-(1-&gt;3)-beta-D-Gal-(1-&gt;4)-beta-D-Glc-(1&lt;-&gt;1)-Cer(d18:1(4E)) + UDP-alpha-D-galactose = a neolactoside nLc4Cer(d18:1(4E)) + UDP + H(+). It catalyses the reaction a beta-D-glucosylceramide + UDP-alpha-D-galactose = a beta-D-galactosyl-(1-&gt;4)-beta-D-glucosyl-(1&lt;-&gt;1)-ceramide + UDP + H(+). The enzyme catalyses a neolactoside IV(3)-beta-GlcNAc-nLc4Cer + UDP-alpha-D-galactose = a neolactoside nLc6Cer + UDP + H(+). The protein operates within protein modification; protein glycosylation. In terms of biological role, responsible for the synthesis of complex-type N-linked oligosaccharides in many glycoproteins as well as the carbohydrate moieties of glycolipids. The protein is Beta-1,4-galactosyltransferase 3 (B4GALT3) of Pongo abelii (Sumatran orangutan).